The following is a 706-amino-acid chain: Translation factor GUF1 homolog, mitochondrial (706 aa).

The 184-residue stretch at 89–272 folds into the tr-type G domain; the sequence is SRIRNFSIIA…SIVKNVPPPQ (184 aa). GTP is bound by residues 98–105, 165–169, and 219–222; these read AHIDHGKS, DTPGH, and NKID.

It belongs to the TRAFAC class translation factor GTPase superfamily. Classic translation factor GTPase family. LepA subfamily.

It localises to the mitochondrion inner membrane. The enzyme catalyses GTP + H2O = GDP + phosphate + H(+). Promotes mitochondrial protein synthesis. May act as a fidelity factor of the translation reaction, by catalyzing a one-codon backward translocation of tRNAs on improperly translocated ribosomes. Binds to mitochondrial ribosomes in a GTP-dependent manner. The chain is Translation factor GUF1 homolog, mitochondrial from Thalassiosira pseudonana (Marine diatom).